Here is a 129-residue protein sequence, read N- to C-terminus: SOSS complex subunit C homolog (129 aa).

The disordered stretch occupies residues 105–129; the sequence is RLEPLPSPATTPTTPNAPPSHSISK.

The protein belongs to the SOSS-C family.

The polypeptide is SOSS complex subunit C homolog (Drosophila simulans (Fruit fly)).